The chain runs to 1838 residues: Collagen alpha-1(V) chain (1838 aa).

The first 37 residues, 1 to 37, serve as a signal peptide directing secretion; that stretch reads MDVHTRWKARSALRPGAPLLPPLLLLLLWAPPPSRAA. Positions 72-244 constitute a Laminin G-like domain; the sequence is DVAYRVTKDA…DYCEHYSPDC (173 aa). Residues 231–443 are nonhelical region; sequence RAAYDYCEHY…MPANQDTIYE (213 aa). Sulfotyrosine occurs at positions 234, 236, 240, 262, and 263. Disordered regions lie at residues 242-269, 281-457, 470-520, 526-545, and 559-1574; these read PDCDTAVPDTPQSQDPNPDEYYTEGDGE, EDPE…QKGE, PPGP…GTML, FGGGGDAGSKGPMVSAQESQ, and GPAG…EVIQ. The span at 258–269 shows a compositional bias: acidic residues; the sequence is NPDEYYTEGDGE. The segment covering 285–304 has biased composition (basic and acidic residues); that stretch reads DLGKEPTPSKKPVEAAKETT. Residues 309–323 show a composition bias toward low complexity; it reads ELTPTPTEAAPMPET. Sulfotyrosine occurs at positions 338, 340, 346, and 347. Residues 377-388 are compositionally biased toward polar residues; that stretch reads PTSTADTSNSSN. A compositionally biased stretch (acidic residues) spans 396-406; the sequence is GADDLEGEFTE. A sulfotyrosine mark is found at tyrosine 416, tyrosine 417, tyrosine 420, and tyrosine 421. Over residues 417–428 the composition is skewed to low complexity; sequence YDPYYDPTSSPS. The interval 444–558 is interrupted collagenous region; the sequence is GIGGPRGEKG…ILQQARLALR (115 aa). The segment covering 470-485 has biased composition (pro residues); it reads PPGPEGPAGLPGPPGT. A compositionally biased stretch (low complexity) spans 506–520; it reads LPGADGLPGPPGTML. Residues 559–1570 form a triple-helical region region; the sequence is GPAGPMGLTG…GPPGPPGPPG (1012 aa). Residues proline 570 and proline 576 each carry the hydroxyproline modification. Over residues 587–597 the composition is skewed to low complexity; the sequence is DVGPQGPRGVQ. Proline 621 is subject to Hydroxyproline. Lysine 627 bears the 5-hydroxylysine mark. A Hydroxyproline modification is found at proline 639. Lysine 642 is modified (5-hydroxylysine). Residues proline 648, proline 654, proline 657, proline 675, and proline 678 each carry the hydroxyproline modification. The segment covering 671–686 has biased composition (low complexity); the sequence is PRGLPGEPGPRGLLGP. The residue at position 687 (lysine 687) is a 5-hydroxylysine. Residues 687 to 696 are compositionally biased toward pro residues; it reads KGPPGPPGPP. Proline 690, proline 696, and proline 705 each carry hydroxyproline. Lysine 708 is modified (5-hydroxylysine). Hydroxyproline is present on residues proline 717, proline 720, proline 726, and proline 732. Low complexity predominate over residues 722-741; sequence QQGNPGAQGLPGPQGAIGPP. Lysine 744 is subject to 5-hydroxylysine. Residues 747 to 756 are compositionally biased toward low complexity; sequence LGKPGLPGMP. Hydroxyproline is present on residues proline 750, proline 756, proline 762, proline 765, and proline 771. Residue lysine 774 is modified to 5-hydroxylysine. Hydroxyproline occurs at positions 780 and 789. 5-hydroxylysine occurs at positions 795, 804, 807, and 810. Proline 816 bears the Hydroxyproline mark. At lysine 819 the chain carries 5-hydroxylysine. Position 834 is a hydroxyproline (proline 834). Basic and acidic residues predominate over residues 837–846; it reads RGEDGPEGPK. The residue at position 846 (lysine 846) is a 5-hydroxylysine. Proline 861 bears the Hydroxyproline mark. Residue lysine 864 is modified to 5-hydroxylysine. The segment covering 867-876 has biased composition (low complexity); that stretch reads LGVPGLPGYP. 3 positions are modified to hydroxyproline: proline 870, proline 873, and proline 876. Lysine 882 bears the 5-hydroxylysine mark. Proline 888 and proline 891 each carry hydroxyproline. Lysine 897 carries the 5-hydroxylysine modification. Residues proline 903 and proline 906 each carry the hydroxyproline modification. Positions 908-917 are enriched in low complexity; sequence PRGQRGPTGP. A hydroxyproline mark is found at proline 930 and proline 945. 2 stretches are compositionally biased toward low complexity: residues 971–990 and 999–1011; these read KDGLPGHPGQRGETGFQGKT and VGPQGPTGETGPM. Hydroxyproline is present on residues proline 1017, proline 1020, proline 1023, and proline 1029. A compositionally biased stretch (low complexity) spans 1088–1104; that stretch reads SPGERGPAGAAGPIGIP. The span at 1106–1115 shows a compositional bias: pro residues; the sequence is RPGPQGPPGP. Residues 1116–1140 are compositionally biased toward low complexity; that stretch reads AGEKGAPGEKGPQGPAGRDGLQGPV. 2 positions are modified to hydroxyproline: proline 1221 and proline 1224. Low complexity predominate over residues 1259–1268; the sequence is PSGAPGADGP. Pro residues-rich tracts occupy residues 1380 to 1398 and 1454 to 1469; these read TGEPGPSGPPGKRGPPGPA and SPGPDGPPGPMGPPGL. 2 positions are modified to hydroxyproline: proline 1467 and proline 1470. A compositionally biased stretch (low complexity) spans 1485 to 1494; sequence PGLIGLIGPP. A compositionally biased stretch (pro residues) spans 1526–1541; sequence PIGPPGPPGLPGPPGP. A compositionally biased stretch (low complexity) spans 1542 to 1554; the sequence is KGAKGSSGPTGPK. The segment covering 1560 to 1569 has biased composition (pro residues); it reads PGPPGPPGPP. Residues 1571–1605 form a nonhelical region region; the sequence is EVIQPLPIQASRTRRNIDASQLLDDGNGENYVDYA. A sulfotyrosine mark is found at tyrosine 1601 and tyrosine 1604. A propeptide spans 1606-1838 (C-terminal propeptide); it reads DGMEEIFGSL…FEVGPACFMG (233 aa). One can recognise a Fibrillar collagen NC1 domain in the interval 1609 to 1837; it reads EEIFGSLNSL…GFEVGPACFM (229 aa). Cystine bridges form between cysteine 1639–cysteine 1671, cysteine 1680–cysteine 1835, and cysteine 1746–cysteine 1789. Aspartate 1657, asparagine 1659, glutamine 1660, cysteine 1662, and aspartate 1665 together coordinate Ca(2+).

This sequence belongs to the fibrillar collagen family. As to quaternary structure, trimers of two alpha 1(V) and one alpha 2(V) chains in most tissues and trimers of one alpha 1(V), one alpha 2(V), and one alpha 3(V) chains in placenta. Interacts with CSPG4. Prolines at the third position of the tripeptide repeating unit (G-X-Y) are hydroxylated in some or all of the chains. Post-translationally, sulfated on 40% of tyrosines.

It is found in the secreted. The protein localises to the extracellular space. It localises to the extracellular matrix. Type V collagen is a member of group I collagen (fibrillar forming collagen). It is a minor connective tissue component of nearly ubiquitous distribution. Type V collagen binds to DNA, heparan sulfate, thrombospondin, heparin, and insulin. This is Collagen alpha-1(V) chain (COL5A1) from Homo sapiens (Human).